We begin with the raw amino-acid sequence, 497 residues long: MTDELLPYDEVMANYEPVVGLEVHVELSTATKMFCGCSTDTDKDPNTNVCPVCLGLPGSMPAINGHAVESAIRIGLALNCHIAQWCRMARKNYFYPDMTKNYQTSQYDEPICYDGWLDVEADGETFRVEIERAHMEEDAGKSLHVGGSDGRISGASHSLMDYNRAGVPLIEIVTKPIRGLGAKAPQVARAYMAQLRDIMIALGVSEARMERGNLRCDANVSLMPRGSETLGTRTETKNVNSLRSVEGALRYEIQRQGYLLSEGRKVRQQTRMWQEAGEYTIAGRDKSDAEDYRYFPEPDLVPIAPSREWVEQLRAELPELPAAKKARLSSQWQFSEADMTSAVNAGALDLLEATVDAGCQPAAARKWWLTELSRRANEAGVDLAEVGMTPCQVAQLQKLVDDGTLTDKLARQVIDGVIAGEGDPQQVVDGRGLAVVSDDAALGSAVDDVIAANPQIAEKIRGGKVQAAGALIGQIMKVMKGQADAKRVRELILEKLS.

This sequence belongs to the GatB/GatE family. GatB subfamily. As to quaternary structure, heterotrimer of A, B and C subunits.

The catalysed reaction is L-glutamyl-tRNA(Gln) + L-glutamine + ATP + H2O = L-glutaminyl-tRNA(Gln) + L-glutamate + ADP + phosphate + H(+). It catalyses the reaction L-aspartyl-tRNA(Asn) + L-glutamine + ATP + H2O = L-asparaginyl-tRNA(Asn) + L-glutamate + ADP + phosphate + 2 H(+). Its function is as follows. Allows the formation of correctly charged Asn-tRNA(Asn) or Gln-tRNA(Gln) through the transamidation of misacylated Asp-tRNA(Asn) or Glu-tRNA(Gln) in organisms which lack either or both of asparaginyl-tRNA or glutaminyl-tRNA synthetases. The reaction takes place in the presence of glutamine and ATP through an activated phospho-Asp-tRNA(Asn) or phospho-Glu-tRNA(Gln). This chain is Aspartyl/glutamyl-tRNA(Asn/Gln) amidotransferase subunit B, found in Cutibacterium acnes (strain DSM 16379 / KPA171202) (Propionibacterium acnes).